The chain runs to 508 residues: Putative inorganic phosphate transporter 1-13 (508 aa).

Residues 1–22 (MAGNQQLRVLHALDIARTQLYH) lie on the Cytoplasmic side of the membrane. A helical transmembrane segment spans residues 23–43 (FIAIVIAGMGFFTDAYDLFSI). Residues 44 to 64 (SLVADLLGHVYYHGELPRNIH) are Extracellular-facing. A helical transmembrane segment spans residues 65-85 (AAVTGIALCGTVPGQLVFGWL). At 86–93 (GDKMGRKR) the chain is on the cytoplasmic side. The helical transmembrane segment at 94 to 114 (VYGITLLLMVVSSLASGLSFS) threads the bilayer. Over 115–117 (KHE) the chain is Extracellular. The chain crosses the membrane as a helical span at residues 118 to 138 (GMNIIAVLCFFRFWLGVSIGG). Residues 139–159 (DYPLSATIMSEYANKRTRGAF) lie on the Cytoplasmic side of the membrane. A helical membrane pass occupies residues 160 to 180 (IAAVFAMQGFGNLAAGIIGMI). The Extracellular portion of the chain corresponds to 181 to 192 (VSAAFKHSSASK). A helical transmembrane segment spans residues 193 to 213 (IDYAWRIILMFGAIPAALTYH). Topologically, residues 214–277 (WRMKMPETAR…FEFLHRHGLH (64 aa)) are cytoplasmic. The helical transmembrane segment at 278 to 298 (LLGTTVCWFVLDVTFYSLNIF) threads the bilayer. Residues 299-328 (MKNIFTEVGLLPRLDSEYHHTLQRMITMTA) lie on the Extracellular side of the membrane. The helical transmembrane segment at 329-349 (VHTFISLCGALPGYFFTVAFV) threads the bilayer. Over 350-354 (DRIGR) the chain is Cytoplasmic. A helical transmembrane segment spans residues 355-375 (VKIQLIGFTMMTVFMLCLAIP). The Extracellular portion of the chain corresponds to 376 to 389 (YDQWLRHKNKYGFA). A helical transmembrane segment spans residues 390-410 (VMYGLTFFFANFGPNTTTFII). The Cytoplasmic segment spans residues 411–424 (PAEIFPARLRSTCH). The chain crosses the membrane as a helical span at residues 425–445 (GISGAVGKIGAIVGVFGFLYT). Topologically, residues 446–450 (EYHIR) are extracellular. Residues 451–471 (IFLFVLIGCNLVGFIFTLLLP) form a helical membrane-spanning segment. Residues 472–508 (ESKGKSLEDLTGEIEEFQEEDEGSEVALSRPIHTVPL) lie on the Cytoplasmic side of the membrane.

This sequence belongs to the major facilitator superfamily. Phosphate:H(+) symporter (TC 2.A.1.9) family.

Its subcellular location is the membrane. In terms of biological role, high-affinity transporter for external inorganic phosphate. The protein is Putative inorganic phosphate transporter 1-13 (PHT1-13) of Oryza sativa subsp. japonica (Rice).